Consider the following 227-residue polypeptide: 27 kDa A-type inclusion protein (227 aa).

Residues 4-210 adopt a coiled-coil conformation; it reads MPKQREMRRL…AECRRGNNGS (207 aa).

The chain is 27 kDa A-type inclusion protein from Bos taurus (Bovine).